The following is a 526-amino-acid chain: Phosphoenolpyruvate carboxylase (526 aa).

Belongs to the PEPCase type 2 family. In terms of assembly, homotetramer. Mg(2+) serves as cofactor.

It catalyses the reaction oxaloacetate + phosphate = phosphoenolpyruvate + hydrogencarbonate. Catalyzes the irreversible beta-carboxylation of phosphoenolpyruvate (PEP) to form oxaloacetate (OAA), a four-carbon dicarboxylic acid source for the tricarboxylic acid cycle. The protein is Phosphoenolpyruvate carboxylase of Methanosarcina barkeri (strain Fusaro / DSM 804).